A 196-amino-acid polypeptide reads, in one-letter code: uncharacterized protein (196 aa).

To E.coli YjaG.

This is an uncharacterized protein from Haemophilus influenzae (strain ATCC 51907 / DSM 11121 / KW20 / Rd).